Reading from the N-terminus, the 361-residue chain is G2/mitotic-specific cyclin-B1 (361 aa).

Positions Met-1–Asn-13 are enriched in polar residues. Residues Met-1–Asn-33 form a disordered region.

It belongs to the cyclin family. Cyclin AB subfamily. Interacts with the CDK1 protein kinase to form a serine/threonine kinase holoenzyme complex also known as maturation promoting factor (MPF). The cyclin subunit imparts substrate specificity to the complex. Interacts with E3 ubiquitin-protein ligase etc-1. Ubiquitinated by etc-1 likely during meiosis, resulting in its degradation.

The protein resides in the cytoplasm. In terms of biological role, essential for the control of the cell cycle at the G2/M (mitosis) transition. The chain is G2/mitotic-specific cyclin-B1 (cyb-1) from Caenorhabditis elegans.